Here is a 319-residue protein sequence, read N- to C-terminus: tRNA-modifying protein YgfZ (319 aa).

Positions 27 and 189 each coordinate folate.

Belongs to the tRNA-modifying YgfZ family.

It is found in the cytoplasm. Its function is as follows. Folate-binding protein involved in regulating the level of ATP-DnaA and in the modification of some tRNAs. It is probably a key factor in regulatory networks that act via tRNA modification, such as initiation of chromosomal replication. This is tRNA-modifying protein YgfZ from Buchnera aphidicola subsp. Schizaphis graminum (strain Sg).